A 224-amino-acid polypeptide reads, in one-letter code: N-(5'-phosphoribosyl)anthranilate isomerase (224 aa).

It belongs to the TrpF family.

The catalysed reaction is N-(5-phospho-beta-D-ribosyl)anthranilate = 1-(2-carboxyphenylamino)-1-deoxy-D-ribulose 5-phosphate. Its pathway is amino-acid biosynthesis; L-tryptophan biosynthesis; L-tryptophan from chorismate: step 3/5. The sequence is that of N-(5'-phosphoribosyl)anthranilate isomerase from Sinorhizobium fredii (strain NBRC 101917 / NGR234).